The primary structure comprises 94 residues: Large ribosomal subunit protein uL23 (94 aa).

Belongs to the universal ribosomal protein uL23 family. In terms of assembly, part of the 50S ribosomal subunit. Contacts protein L29, and trigger factor when it is bound to the ribosome.

Its function is as follows. One of the early assembly proteins it binds 23S rRNA. One of the proteins that surrounds the polypeptide exit tunnel on the outside of the ribosome. Forms the main docking site for trigger factor binding to the ribosome. This chain is Large ribosomal subunit protein uL23, found in Symbiobacterium thermophilum (strain DSM 24528 / JCM 14929 / IAM 14863 / T).